Here is a 453-residue protein sequence, read N- to C-terminus: Cysteine desulfurase, mitochondrial (453 aa).

Residues 1 to 34 constitute a mitochondrion transit peptide; it reads MASKVISATIRRTLTKPHGTFSRCRYLSTAAAAT. Residues 123–124, Asn203, Gln231, and 251–253 each bind pyridoxal 5'-phosphate; these read AT and SAH. N6-(pyridoxal phosphate)lysine is present on Lys254. Thr291 is a binding site for pyridoxal 5'-phosphate. Cys377 functions as the Cysteine persulfide intermediate in the catalytic mechanism. A [2Fe-2S] cluster-binding site is contributed by Cys377.

Belongs to the class-V pyridoxal-phosphate-dependent aminotransferase family. NifS/IscS subfamily. As to quaternary structure, interacts with FH. Interacts with SUFE1. Pyridoxal 5'-phosphate is required as a cofactor.

Its subcellular location is the mitochondrion. It carries out the reaction (sulfur carrier)-H + L-cysteine = (sulfur carrier)-SH + L-alanine. With respect to regulation, threefold increase in the catalytic activity in the presence of FH (frataxin). 30-fold increase in the catalytic activity in the presence of SUFE1. Its function is as follows. Catalyzes the removal of elemental sulfur from cysteine to produce alanine. Supplies the inorganic sulfur for iron-sulfur (Fe-S) clusters. The protein is Cysteine desulfurase, mitochondrial of Arabidopsis thaliana (Mouse-ear cress).